A 365-amino-acid chain; its full sequence is Flagellar P-ring protein (365 aa).

The first 19 residues, 1-19 (MIKFLSALILLLVITAAQA), serve as a signal peptide directing secretion.

This sequence belongs to the FlgI family. The basal body constitutes a major portion of the flagellar organelle and consists of four rings (L,P,S, and M) mounted on a central rod.

Its subcellular location is the periplasm. It is found in the bacterial flagellum basal body. Its function is as follows. Assembles around the rod to form the L-ring and probably protects the motor/basal body from shearing forces during rotation. The polypeptide is Flagellar P-ring protein (Escherichia coli O81 (strain ED1a)).